Here is a 397-residue protein sequence, read N- to C-terminus: Exodeoxyribonuclease 7 large subunit (397 aa).

This sequence belongs to the XseA family. In terms of assembly, heterooligomer composed of large and small subunits.

Its subcellular location is the cytoplasm. The catalysed reaction is Exonucleolytic cleavage in either 5'- to 3'- or 3'- to 5'-direction to yield nucleoside 5'-phosphates.. Its function is as follows. Bidirectionally degrades single-stranded DNA into large acid-insoluble oligonucleotides, which are then degraded further into small acid-soluble oligonucleotides. The sequence is that of Exodeoxyribonuclease 7 large subunit from Anaplasma marginale (strain St. Maries).